Reading from the N-terminus, the 816-residue chain is Molybdenum cofactor sulfurase (816 aa).

K273 is subject to N6-(pyridoxal phosphate)lysine. Residue C427 is part of the active site. The region spanning 647–812 (NSDSQSHSCI…IRVGEEIIPN (166 aa)) is the MOSC domain.

Belongs to the class-V pyridoxal-phosphate-dependent aminotransferase family. MOCOS subfamily. Pyridoxal 5'-phosphate serves as cofactor. In terms of tissue distribution, ubiquitously expressed.

The catalysed reaction is Mo-molybdopterin + L-cysteine + AH2 = thio-Mo-molybdopterin + L-alanine + A + H2O. It participates in cofactor biosynthesis; molybdopterin biosynthesis. Functionally, sulfurates the molybdenum cofactor. Sulfation of molybdenum is essential for xanthine dehydrogenase (XDH) and aldehyde oxidase (ADO) enzymes in which molybdenum cofactor is liganded by 1 oxygen and 1 sulfur atom in active form. The protein is Molybdenum cofactor sulfurase (FLACCA) of Solanum lycopersicum (Tomato).